A 103-amino-acid chain; its full sequence is uncharacterized protein (103 aa).

The tract at residues 1–103 is disordered; that stretch reads MAGARRRARC…WRGGSCTSQR (103 aa). 2 stretches are compositionally biased toward basic residues: residues 55–65 and 74–84; these read RRPGPGRRARS and RPPHSRTRARR.

The protein belongs to the epstein-barr virus RPMS1 family.

This is an uncharacterized protein from Epstein-Barr virus (strain GD1) (HHV-4).